The chain runs to 161 residues: RNA pyrophosphohydrolase (161 aa).

A Nudix hydrolase domain is found at 12-154 (PYRPGVGMMI…KRKLYQAVVK (143 aa)). The Nudix box signature appears at 46–67 (GGIVPGETPSIAAMREMLEEIG).

The protein belongs to the Nudix hydrolase family. RppH subfamily. Requires a divalent metal cation as cofactor.

In terms of biological role, accelerates the degradation of transcripts by removing pyrophosphate from the 5'-end of triphosphorylated RNA, leading to a more labile monophosphorylated state that can stimulate subsequent ribonuclease cleavage. The protein is RNA pyrophosphohydrolase of Rickettsia canadensis (strain McKiel).